A 111-amino-acid polypeptide reads, in one-letter code: uncharacterized protein (111 aa).

The disordered stretch occupies residues 1–26 (MDLKDGVEEEEGAGENGKGGTHAQRV).

This is an uncharacterized protein from Caenorhabditis elegans.